Consider the following 492-residue polypeptide: Glutamyl-tRNA(Gln) amidotransferase subunit A (492 aa).

Active-site charge relay system residues include Lys84 and Ser159. Ser183 acts as the Acyl-ester intermediate in catalysis.

It belongs to the amidase family. GatA subfamily. Heterotrimer of A, B and C subunits.

It catalyses the reaction L-glutamyl-tRNA(Gln) + L-glutamine + ATP + H2O = L-glutaminyl-tRNA(Gln) + L-glutamate + ADP + phosphate + H(+). Allows the formation of correctly charged Gln-tRNA(Gln) through the transamidation of misacylated Glu-tRNA(Gln) in organisms which lack glutaminyl-tRNA synthetase. The reaction takes place in the presence of glutamine and ATP through an activated gamma-phospho-Glu-tRNA(Gln). This is Glutamyl-tRNA(Gln) amidotransferase subunit A from Anaeromyxobacter dehalogenans (strain 2CP-C).